A 165-amino-acid chain; its full sequence is NADPH-dependent 7-cyano-7-deazaguanine reductase (165 aa).

C56 (thioimide intermediate) is an active-site residue. D63 serves as the catalytic Proton donor. Residues 78–80 and 97–98 contribute to the substrate site; these read VES and HE.

Belongs to the GTP cyclohydrolase I family. QueF type 1 subfamily.

It localises to the cytoplasm. It catalyses the reaction 7-aminomethyl-7-carbaguanine + 2 NADP(+) = 7-cyano-7-deazaguanine + 2 NADPH + 3 H(+). It functions in the pathway tRNA modification; tRNA-queuosine biosynthesis. Catalyzes the NADPH-dependent reduction of 7-cyano-7-deazaguanine (preQ0) to 7-aminomethyl-7-deazaguanine (preQ1). The protein is NADPH-dependent 7-cyano-7-deazaguanine reductase of Bacillus licheniformis (strain ATCC 14580 / DSM 13 / JCM 2505 / CCUG 7422 / NBRC 12200 / NCIMB 9375 / NCTC 10341 / NRRL NRS-1264 / Gibson 46).